A 284-amino-acid polypeptide reads, in one-letter code: Large ribosomal subunit protein uL2 (284 aa).

Residues 232–284 (RGTAMNPVDHPHGGGEGRHNGYIPRTPWGKVTKGLKTRDKRKSNKWIVKDRRK) are disordered. A compositionally biased stretch (basic and acidic residues) spans 240 to 250 (DHPHGGGEGRH). A compositionally biased stretch (basic residues) spans 264 to 284 (KGLKTRDKRKSNKWIVKDRRK).

The protein belongs to the universal ribosomal protein uL2 family. In terms of assembly, part of the 50S ribosomal subunit. Forms a bridge to the 30S subunit in the 70S ribosome.

Its function is as follows. One of the primary rRNA binding proteins. Required for association of the 30S and 50S subunits to form the 70S ribosome, for tRNA binding and peptide bond formation. It has been suggested to have peptidyltransferase activity; this is somewhat controversial. Makes several contacts with the 16S rRNA in the 70S ribosome. This Chlamydia felis (strain Fe/C-56) (Chlamydophila felis) protein is Large ribosomal subunit protein uL2.